Reading from the N-terminus, the 142-residue chain is Hemoglobin subunit theta-1 (142 aa).

One can recognise a Globin domain in the interval alanine 2–arginine 142. The heme b site is built by histidine 59 and histidine 88.

The protein belongs to the globin family.

The sequence is that of Hemoglobin subunit theta-1 (HBQ1) from Pongo pygmaeus (Bornean orangutan).